A 123-amino-acid polypeptide reads, in one-letter code: MTKSVMIVEDNELNMKLFRDLIEASGYETIRTRSGLEALDLAREHHPDLILMDIQLPEVSGLEVTKWLKDDEELRHIPVIAVTAFAMKGDEERIRQGGCEAYISKPISVPRFIETIKSYLGDA.

The Response regulatory domain maps to 4–120 (SVMIVEDNEL…RFIETIKSYL (117 aa)). Asp53 is subject to 4-aspartylphosphate.

In terms of assembly, interacts with DivL, PleC, DivJ and PdhS.

It is found in the cytoplasm. Its function is as follows. Essential protein that is involved in the control of cell division, probably through the regulation of ctrA. Its phosphorylation status is regulated by PdhS. This Brucella suis (strain ATCC 23445 / NCTC 10510) protein is Polar-differentiation response regulator DivK (divK).